Consider the following 408-residue polypeptide: Putative FBD-associated F-box protein At5g50270 (408 aa).

One can recognise an F-box domain in the interval 1–54 (MDRISGLPDELLLRVLSLLPNVKDVVVTMVLSKRWQFLWMMVPKLVYDDSYQNL). One can recognise an FBD domain in the interval 345-408 (PLRDDLSSVP…VNPDKKYEMI (64 aa)).

The polypeptide is Putative FBD-associated F-box protein At5g50270 (Arabidopsis thaliana (Mouse-ear cress)).